A 510-amino-acid polypeptide reads, in one-letter code: GMP synthase [glutamine-hydrolyzing] (510 aa).

The region spanning leucine 5–aspartate 195 is the Glutamine amidotransferase type-1 domain. Cysteine 82 (nucleophile) is an active-site residue. Catalysis depends on residues histidine 169 and glutamate 171. Residues tryptophan 196–arginine 385 form the GMPS ATP-PPase domain. Serine 223 to serine 229 contacts ATP.

In terms of assembly, homodimer.

The catalysed reaction is XMP + L-glutamine + ATP + H2O = GMP + L-glutamate + AMP + diphosphate + 2 H(+). It functions in the pathway purine metabolism; GMP biosynthesis; GMP from XMP (L-Gln route): step 1/1. In terms of biological role, catalyzes the synthesis of GMP from XMP. This Clostridium acetobutylicum (strain ATCC 824 / DSM 792 / JCM 1419 / IAM 19013 / LMG 5710 / NBRC 13948 / NRRL B-527 / VKM B-1787 / 2291 / W) protein is GMP synthase [glutamine-hydrolyzing].